Here is a 256-residue protein sequence, read N- to C-terminus: Small ribosomal subunit protein eS1 (256 aa).

A compositionally biased stretch (basic residues) spans 1-18 (MAVGKNKRLSKGKKGLKK). The tract at residues 1-22 (MAVGKNKRLSKGKKGLKKKTQD) is disordered. Residue Ala-2 is modified to N-acetylalanine; partial.

Belongs to the eukaryotic ribosomal protein eS1 family. Component of the small ribosomal subunit (SSU). Mature N.crassa ribosomes consist of a small (40S) and a large (60S) subunit. The 40S small subunit contains 1 molecule of ribosomal RNA (18S rRNA) and at least 32 different proteins. The large 60S subunit contains 3 rRNA molecules (26S, 5.8S and 5S rRNA) and at least 42 different proteins.

It localises to the cytoplasm. Functionally, component of the ribosome, a large ribonucleoprotein complex responsible for the synthesis of proteins in the cell. The small ribosomal subunit (SSU) binds messenger RNAs (mRNAs) and translates the encoded message by selecting cognate aminoacyl-transfer RNA (tRNA) molecules. The large subunit (LSU) contains the ribosomal catalytic site termed the peptidyl transferase center (PTC), which catalyzes the formation of peptide bonds, thereby polymerizing the amino acids delivered by tRNAs into a polypeptide chain. The nascent polypeptides leave the ribosome through a tunnel in the LSU and interact with protein factors that function in enzymatic processing, targeting, and the membrane insertion of nascent chains at the exit of the ribosomal tunnel. This Neurospora crassa (strain ATCC 24698 / 74-OR23-1A / CBS 708.71 / DSM 1257 / FGSC 987) protein is Small ribosomal subunit protein eS1 (rps1).